We begin with the raw amino-acid sequence, 67 residues long: Mu-conotoxin TsIIIA (67 aa).

Positions 1–20 (MMSKLGVLLTICLLLFPLTA) are cleaved as a signal peptide. The propeptide occupies 21 to 48 (VPLDGDQPADQPAERKQNEQHPLFDQKR). Cystine bridges form between Cys50–Cys59, Cys51–Cys64, and Cys55–Cys65.

This sequence belongs to the conotoxin M superfamily. In terms of tissue distribution, expressed by the venom duct.

Its subcellular location is the secreted. Its function is as follows. Mu-conotoxins block voltage-gated sodium channels (Nav). This toxin specifically inhibits mammalian Nav1.8/SCN10A sodium currents (IC(50)=2.11 uM) without inducing a shift in the current-voltage relationship of this channel. In vivo, shows potent analgesic activity in a mice hotplate analgesic assay. In addition, this toxin has better analgesic effects than Ziconotide, an analgesic drug. The protein is Mu-conotoxin TsIIIA of Conus tessulatus (Tessellate cone).